The sequence spans 380 residues: Phthiodiolone/phenolphthiodiolone dimycocerosates ketoreductase (380 aa).

The protein belongs to the mer family. Phthiodiolone/phenolphthiodiolone dimycocerosates ketoreductase subfamily.

Functionally, catalyzes the reduction of the keto moiety of phthiodiolone dimycocerosates (DIM B) and glycosylated phenolphthiodiolone dimycocerosates to form the intermediate compounds phthiotriol and glycosylated phenolphthiotriol dimycocerosates during phthiocerol dimycocerosates (DIM A) and glycosylated phenolphthiocerol dimycocerosates (PGL) biosynthesis. The chain is Phthiodiolone/phenolphthiodiolone dimycocerosates ketoreductase from Mycobacterium sp. (strain JLS).